Here is a 215-residue protein sequence, read N- to C-terminus: Probable phosphoglycerate mutase GpmB (215 aa).

Substrate contacts are provided by residues 8-15, 21-22, arginine 58, arginine 60, 82-85, 104-105, and 151-152; these read RHGETQWN, QG, ELNM, RR, and GI. Histidine 9 serves as the catalytic Tele-phosphohistidine intermediate. The active-site Proton donor/acceptor is the glutamate 82.

It belongs to the phosphoglycerate mutase family. GpmB subfamily.

It catalyses the reaction (2R)-2-phosphoglycerate = (2R)-3-phosphoglycerate. It functions in the pathway carbohydrate degradation; glycolysis; pyruvate from D-glyceraldehyde 3-phosphate: step 3/5. This is Probable phosphoglycerate mutase GpmB from Escherichia coli O1:K1 / APEC.